We begin with the raw amino-acid sequence, 181 residues long: uncharacterized protein (181 aa).

2 consecutive transmembrane segments (helical) span residues 24 to 46 and 55 to 77; these read IAAV…LLNV and GIVA…YILL.

The protein localises to the cell membrane. This is an uncharacterized protein from Archaeoglobus fulgidus (strain ATCC 49558 / DSM 4304 / JCM 9628 / NBRC 100126 / VC-16).